The sequence spans 722 residues: Polyribonucleotide nucleotidyltransferase (722 aa).

2 residues coordinate Mg(2+): Asp-495 and Asp-501. Residues 562–621 (PRLLSFRIDPELIGTVIGPGGRTIKGITERTNTKIDIEDGGIVTIASHDGAAAEEAQRII) enclose the KH domain. One can recognise an S1 motif domain in the interval 631–699 (GEIFPGSITR…NRGRINLTLR (69 aa)). The segment at 700 to 722 (GVSQNGGMSNYPEPTPTPVAPLT) is disordered. Residues 712-722 (EPTPTPVAPLT) are compositionally biased toward pro residues.

This sequence belongs to the polyribonucleotide nucleotidyltransferase family. Requires Mg(2+) as cofactor.

It is found in the cytoplasm. The enzyme catalyses RNA(n+1) + phosphate = RNA(n) + a ribonucleoside 5'-diphosphate. Functionally, involved in mRNA degradation. Catalyzes the phosphorolysis of single-stranded polyribonucleotides processively in the 3'- to 5'-direction. The protein is Polyribonucleotide nucleotidyltransferase of Prochlorococcus marinus (strain NATL1A).